The following is a 454-amino-acid chain: tRNA modification GTPase MnmE (454 aa).

Residues R23, E80, and K120 each coordinate (6S)-5-formyl-5,6,7,8-tetrahydrofolate. The 162-residue stretch at 216–377 (GMKVVIAGRP…LRNHLKQSMG (162 aa)) folds into the TrmE-type G domain. Residue N226 participates in K(+) binding. GTP is bound by residues 226–231 (NAGKSS), 245–251 (TDIAGTT), 270–273 (DTAG), 335–338 (NKAD), and 358–360 (SAR). Position 230 (S230) interacts with Mg(2+). Residues T245, I247, and T250 each coordinate K(+). T251 lines the Mg(2+) pocket. K454 contacts (6S)-5-formyl-5,6,7,8-tetrahydrofolate.

Belongs to the TRAFAC class TrmE-Era-EngA-EngB-Septin-like GTPase superfamily. TrmE GTPase family. In terms of assembly, homodimer. Heterotetramer of two MnmE and two MnmG subunits. It depends on K(+) as a cofactor.

The protein resides in the cytoplasm. In terms of biological role, exhibits a very high intrinsic GTPase hydrolysis rate. Involved in the addition of a carboxymethylaminomethyl (cmnm) group at the wobble position (U34) of certain tRNAs, forming tRNA-cmnm(5)s(2)U34. This Enterobacter sp. (strain 638) protein is tRNA modification GTPase MnmE.